The sequence spans 135 residues: uncharacterized protein (135 aa).

The helical transmembrane segment at 35-55 (VVLVLIGATIILVVISVLVVS) threads the bilayer.

It localises to the membrane. This is an uncharacterized protein from Saccharomyces cerevisiae (strain ATCC 204508 / S288c) (Baker's yeast).